The primary structure comprises 285 residues: V-set and transmembrane domain-containing protein 2B (285 aa).

Residues 1 to 28 form the signal peptide; the sequence is MEQRNRLGALGYLPPLLLHALLLFVADA. Positions 29–143 constitute an Ig-like V-type domain; that stretch reads AFTEVPKDVT…DDDTQEHKAQ (115 aa). Residues 29–263 are Extracellular-facing; that stretch reads AFTEVPKDVT…HGSGTGRSYT (235 aa). The cysteines at positions 49 and 127 are disulfide-linked. A disordered region spans residues 161-226; that stretch reads EAVSHIQSSG…EAAAASAAHT (66 aa). Low complexity-rich tracts occupy residues 177–189 and 208–226; these read ASAA…GAAS and PAAI…AAHT. The chain crosses the membrane as a helical span at residues 264–284; sequence TDPLLSLLLLALHKFLRLLLG. H285 is a topological domain (cytoplasmic).

It is found in the membrane. This Homo sapiens (Human) protein is V-set and transmembrane domain-containing protein 2B (VSTM2B).